The chain runs to 715 residues: Macrolide export ATP-binding/permease protein MacB (715 aa).

Residues 4–245 (IELQDIRKTY…VSKAAPAQSK (242 aa)) enclose the ABC transporter domain. 40–47 (GTSGSGKT) contacts ATP. Residues 229 to 251 (AVGDMPQVSKAAPAQSKPVHSAM) form a disordered region. 4 helical membrane-spanning segments follow: residues 277 to 297 (AALT…MMEI), 592 to 612 (LLLA…MNIM), 639 to 659 (QFLF…ILVG), and 681 to 701 (ILAA…YPAW).

It belongs to the ABC transporter superfamily. Macrolide exporter (TC 3.A.1.122) family. As to quaternary structure, homodimer.

The protein localises to the cell inner membrane. Non-canonical ABC transporter that contains transmembrane domains (TMD), which form a pore in the inner membrane, and an ATP-binding domain (NBD), which is responsible for energy generation. Confers resistance against macrolides. The chain is Macrolide export ATP-binding/permease protein MacB from Syntrophobacter fumaroxidans (strain DSM 10017 / MPOB).